Consider the following 178-residue polypeptide: Translation initiation factor IF-3 (178 aa).

It belongs to the IF-3 family. In terms of assembly, monomer.

The protein localises to the cytoplasm. In terms of biological role, IF-3 binds to the 30S ribosomal subunit and shifts the equilibrium between 70S ribosomes and their 50S and 30S subunits in favor of the free subunits, thus enhancing the availability of 30S subunits on which protein synthesis initiation begins. In Macrococcus caseolyticus (strain JCSC5402) (Macrococcoides caseolyticum), this protein is Translation initiation factor IF-3.